Reading from the N-terminus, the 499-residue chain is Probable malate:quinone oxidoreductase 4 (499 aa).

The protein belongs to the MQO family. It depends on FAD as a cofactor.

It carries out the reaction (S)-malate + a quinone = a quinol + oxaloacetate. Its pathway is carbohydrate metabolism; tricarboxylic acid cycle; oxaloacetate from (S)-malate (quinone route): step 1/1. The protein is Probable malate:quinone oxidoreductase 4 of Staphylococcus epidermidis (strain ATCC 12228 / FDA PCI 1200).